The chain runs to 151 residues: Pseudo histidine-containing phosphotransfer protein 2 (151 aa).

The HPt domain maps to 38 to 133 (SPNFVEEVAA…ATLKQKLESY (96 aa)).

Functionally, functions as a two-component phosphorelay mediator between cytokinin sensor histidine kinases and response regulators (B-type ARRs). Plays an important role in propagating cytokinin signal transduction. The chain is Pseudo histidine-containing phosphotransfer protein 2 from Oryza sativa subsp. japonica (Rice).